Here is a 471-residue protein sequence, read N- to C-terminus: Protein translocase subunit SecF (471 aa).

Residues 1 to 29 are disordered; the sequence is MVSRAKVGAETTKGIDEPDRNDNTDDNGA. Residues 13–23 are compositionally biased toward basic and acidic residues; the sequence is KGIDEPDRNDN. 6 helical membrane-spanning segments follow: residues 88-108, 211-231, 242-262, 267-287, 325-345, and 355-375; these read GGVI…TFGI, ITKK…LYIT, ALTT…LVGF, ATVI…VIVF, LISV…LGVG, and LVGI…LLVT. The segment at 393–471 is disordered; it reads RRTLGSQVGK…TGKRNNVGRR (79 aa). Residues 415–431 are compositionally biased toward polar residues; that stretch reads KPQNQAESCADASSQEG. Low complexity predominate over residues 448 to 460; sequence PGVRPVRPTGTRR. Residues 461 to 471 show a composition bias toward basic residues; sequence PTGKRNNVGRR.

It belongs to the SecD/SecF family. SecF subfamily. In terms of assembly, forms a complex with SecD. Part of the essential Sec protein translocation apparatus which comprises SecA, SecYEG and auxiliary proteins SecDF. Other proteins may also be involved.

The protein resides in the cell membrane. Functionally, part of the Sec protein translocase complex. Interacts with the SecYEG preprotein conducting channel. SecDF uses the proton motive force (PMF) to complete protein translocation after the ATP-dependent function of SecA. The sequence is that of Protein translocase subunit SecF from Mycobacterium leprae (strain TN).